The chain runs to 434 residues: MFS-type transporter pynF (434 aa).

Residues 1–13 are compositionally biased toward basic and acidic residues; sequence MSHDQRSPSEEVS. Residues 1 to 34 are disordered; that stretch reads MSHDQRSPSEEVSRTALSKPASESTIVGDGHHPL. The next 12 helical transmembrane spans lie at 44–64, 84–104, 109–129, 138–158, 171–191, 203–223, 249–269, 280–302, 311–331, 334–354, 375–395, and 402–422; these read WLVV…LNAF, IAWI…VVGP, VGAT…LMLT, LILA…YPTI, IALG…TEII, TVRA…VLII, LLFS…FFYL, VTGA…VLTG, FNVI…LHKI, SGAI…LISL, LMMG…GALL, and WYGF…VTIL.

This sequence belongs to the major facilitator superfamily. Monocarboxylate porter (TC 2.A.1.13) family.

It is found in the cell membrane. Its function is as follows. MFS-type transporter; part of the gene cluster that mediates the biosynthesis of pyranonigrins, a family of antioxidative compounds. May be involved in the secretion of pyranonigrins. The polypeptide is MFS-type transporter pynF (Aspergillus niger (strain ATCC MYA-4892 / CBS 513.88 / FGSC A1513)).